A 97-amino-acid polypeptide reads, in one-letter code: Co-chaperonin GroES (97 aa).

It belongs to the GroES chaperonin family. In terms of assembly, heptamer of 7 subunits arranged in a ring. Interacts with the chaperonin GroEL.

The protein localises to the cytoplasm. Functionally, together with the chaperonin GroEL, plays an essential role in assisting protein folding. The GroEL-GroES system forms a nano-cage that allows encapsulation of the non-native substrate proteins and provides a physical environment optimized to promote and accelerate protein folding. GroES binds to the apical surface of the GroEL ring, thereby capping the opening of the GroEL channel. The protein is Co-chaperonin GroES of Pseudomonas savastanoi pv. phaseolicola (strain 1448A / Race 6) (Pseudomonas syringae pv. phaseolicola (strain 1448A / Race 6)).